Here is a 394-residue protein sequence, read N- to C-terminus: Ribulose bisphosphate carboxylase large chain (394 aa).

Lys-5 is modified (N6,N6,N6-trimethyllysine). Residues Asn-114 and Thr-164 each coordinate substrate. The active-site Proton acceptor is Lys-166. Lys-168 lines the substrate pocket. The Mg(2+) site is built by Lys-192, Asp-194, and Glu-195. Lys-192 carries the post-translational modification N6-carboxylysine. His-285 serves as the catalytic Proton acceptor. 3 residues coordinate substrate: Arg-286, His-318, and Ser-370.

It belongs to the RuBisCO large chain family. Type I subfamily. As to quaternary structure, heterohexadecamer of 8 large chains and 8 small chains; disulfide-linked. The disulfide link is formed within the large subunit homodimers. Mg(2+) is required as a cofactor. In terms of processing, the disulfide bond which can form in the large chain dimeric partners within the hexadecamer appears to be associated with oxidative stress and protein turnover.

It localises to the plastid. The protein resides in the chloroplast. The catalysed reaction is 2 (2R)-3-phosphoglycerate + 2 H(+) = D-ribulose 1,5-bisphosphate + CO2 + H2O. It catalyses the reaction D-ribulose 1,5-bisphosphate + O2 = 2-phosphoglycolate + (2R)-3-phosphoglycerate + 2 H(+). In terms of biological role, ruBisCO catalyzes two reactions: the carboxylation of D-ribulose 1,5-bisphosphate, the primary event in carbon dioxide fixation, as well as the oxidative fragmentation of the pentose substrate in the photorespiration process. Both reactions occur simultaneously and in competition at the same active site. This chain is Ribulose bisphosphate carboxylase large chain (rbcL), found in Nelumbo lutea (American lotus).